Consider the following 316-residue polypeptide: Transaldolase 2 (316 aa).

K131 (schiff-base intermediate with substrate) is an active-site residue.

Belongs to the transaldolase family. Type 1 subfamily. In terms of assembly, homodimer.

It localises to the cytoplasm. The catalysed reaction is D-sedoheptulose 7-phosphate + D-glyceraldehyde 3-phosphate = D-erythrose 4-phosphate + beta-D-fructose 6-phosphate. Its pathway is carbohydrate degradation; pentose phosphate pathway; D-glyceraldehyde 3-phosphate and beta-D-fructose 6-phosphate from D-ribose 5-phosphate and D-xylulose 5-phosphate (non-oxidative stage): step 2/3. Functionally, transaldolase is important for the balance of metabolites in the pentose-phosphate pathway. The polypeptide is Transaldolase 2 (Shigella sonnei (strain Ss046)).